The chain runs to 506 residues: Anaerobic nitric oxide reductase transcription regulator NorR (506 aa).

Position 57 is a 4-aspartylphosphate (aspartate 57). Residues 187–416 (MIGLSPAMTQ…LEHAIHRAVV (230 aa)) form the Sigma-54 factor interaction domain. ATP-binding positions include 215-222 (GETGTGKE) and 278-287 (ADNGTLFLDE). Positions 481 to 500 (WAASARALETDVANLHRLAK) form a DNA-binding region, H-T-H motif.

Its pathway is nitrogen metabolism; nitric oxide reduction. In terms of biological role, required for the expression of anaerobic nitric oxide (NO) reductase, acts as a transcriptional activator for at least the norVW operon. Activation also requires sigma-54. This chain is Anaerobic nitric oxide reductase transcription regulator NorR, found in Salmonella choleraesuis (strain SC-B67).